Reading from the N-terminus, the 68-residue chain is Suppressor of RNA silencing (68 aa).

A helical membrane pass occupies residues 23–43 (LLTMSGAYVNVCVCIVFFILV).

It belongs to the virgaviridae suppressor of RNA silencing family.

The protein resides in the host endoplasmic reticulum membrane. Its function is as follows. Suppressor of RNA-mediated gene silencing, also known as post-transcriptional gene silencing (PTGS), a mechanism of plant viral defense that performs sequence-specific inhibition of viral mRNAs expression. The RNA silencing suppression activity is variable depending on the origin of the isolate. The polypeptide is Suppressor of RNA silencing (8K protein) (Solanum nigrum (Black nightshade)).